The primary structure comprises 275 residues: Ribosomal RNA small subunit methyltransferase A (275 aa).

S-adenosyl-L-methionine contacts are provided by asparagine 28, leucine 30, glycine 55, glutamate 77, aspartate 103, and asparagine 123.

Belongs to the class I-like SAM-binding methyltransferase superfamily. rRNA adenine N(6)-methyltransferase family. RsmA subfamily.

The protein resides in the cytoplasm. It catalyses the reaction adenosine(1518)/adenosine(1519) in 16S rRNA + 4 S-adenosyl-L-methionine = N(6)-dimethyladenosine(1518)/N(6)-dimethyladenosine(1519) in 16S rRNA + 4 S-adenosyl-L-homocysteine + 4 H(+). Functionally, specifically dimethylates two adjacent adenosines (A1518 and A1519) in the loop of a conserved hairpin near the 3'-end of 16S rRNA in the 30S particle. May play a critical role in biogenesis of 30S subunits. The sequence is that of Ribosomal RNA small subunit methyltransferase A from Rhizobium etli (strain CIAT 652).